The following is a 571-amino-acid chain: MSRTLDRRQYAQIYGPTTGDRLRLGDTALVLEVERDLTTYGDECVFGGGKVLRDGMGQAAGAPPAQVLDLVITNALVVDHAGIFKADVGVRAGRIAALGKAGNPGVMAGVTPGMIVGPGTEVIAGEGLILTAGGIDTHIHFVSPQQAAEAIASGVTTLLGGGTGPATGTNATTCTPGAWNVARMLQATDALPVNVGLLGKGNASSPEGLAEQLRAGAAGLKLHEDWGTTPAAIDACLRVAEAHDVQVAIHTDTLNESGCAEDSIAAFAGRTIHTFHTEGAGGGHAPDIIRVCGEPNVLPSSTNPTRPFTVNTLDEHLDMLVVCHHLDPSLPEDLAFAESRIRGETIAAEDVLHDLGAISMMSSDSQAMGRVGEVVTRTWQTADKMRRQRGRLPGERGDHDNLRIRRYVAKYTVNPAVAHGLADEVGSVEPGKLADLVLWRPAFFGAKPELVLKGGLIAWAQMGDANASIPTPQPVLARPMFGALGRALGATCVAFVAGAALEDGAVQGYGLSKRLVAVRGCRGLGKRDMRLNDALPRMEVDPETYEVRADGELLRCEPAARLPLAQRYFLF.

The region spanning 133–571 (GGIDTHIHFV…LPLAQRYFLF (439 aa)) is the Urease domain. Residues His-138, His-140, and Lys-221 each coordinate Ni(2+). Lys-221 is modified (N6-carboxylysine). His-223 contacts substrate. Residues His-250 and His-276 each coordinate Ni(2+). The Proton donor role is filled by His-324. A Ni(2+)-binding site is contributed by Asp-364.

It belongs to the metallo-dependent hydrolases superfamily. Urease alpha subunit family. Heterotrimer of UreA (gamma), UreB (beta) and UreC (alpha) subunits. Three heterotrimers associate to form the active enzyme. It depends on Ni cation as a cofactor. In terms of processing, carboxylation allows a single lysine to coordinate two nickel ions.

The protein localises to the cytoplasm. The enzyme catalyses urea + 2 H2O + H(+) = hydrogencarbonate + 2 NH4(+). The protein operates within nitrogen metabolism; urea degradation; CO(2) and NH(3) from urea (urease route): step 1/1. The polypeptide is Urease subunit alpha (Anaeromyxobacter sp. (strain K)).